The chain runs to 327 residues: Phenylalanine--tRNA ligase alpha subunit (327 aa).

Glutamate 252 is a binding site for Mg(2+).

This sequence belongs to the class-II aminoacyl-tRNA synthetase family. Phe-tRNA synthetase alpha subunit type 1 subfamily. Tetramer of two alpha and two beta subunits. Requires Mg(2+) as cofactor.

Its subcellular location is the cytoplasm. The catalysed reaction is tRNA(Phe) + L-phenylalanine + ATP = L-phenylalanyl-tRNA(Phe) + AMP + diphosphate + H(+). The sequence is that of Phenylalanine--tRNA ligase alpha subunit from Sodalis glossinidius (strain morsitans).